A 208-amino-acid polypeptide reads, in one-letter code: Ribosomal RNA small subunit methyltransferase G (208 aa).

Residues G74, L79, 125-126, and R140 each bind S-adenosyl-L-methionine; that span reads VE.

It belongs to the methyltransferase superfamily. RNA methyltransferase RsmG family.

It localises to the cytoplasm. The catalysed reaction is guanosine(527) in 16S rRNA + S-adenosyl-L-methionine = N(7)-methylguanosine(527) in 16S rRNA + S-adenosyl-L-homocysteine. Its function is as follows. Specifically methylates the N7 position of guanine in position 527 of 16S rRNA. In Shewanella denitrificans (strain OS217 / ATCC BAA-1090 / DSM 15013), this protein is Ribosomal RNA small subunit methyltransferase G.